Here is a 514-residue protein sequence, read N- to C-terminus: Palmitoyltransferase pfa3 (514 aa).

Topologically, residues M1–C31 are cytoplasmic. A helical transmembrane segment spans residues A32–V52. The Lumenal portion of the chain corresponds to E53–S64. The helical transmembrane segment at W65–Y85 threads the bilayer. Residues T86–A174 are Cytoplasmic-facing. Positions R130–I180 constitute a DHHC domain. The helical transmembrane segment at F175–I195 threads the bilayer. The Lumenal portion of the chain corresponds to W196–D209. The helical transmembrane segment at G210–L230 threads the bilayer. Residues T231–D514 are Cytoplasmic-facing. Disordered stretches follow at residues V307–R336 and G436–D514. A compositionally biased stretch (polar residues) spans D318 to S328. A compositionally biased stretch (basic and acidic residues) spans S505–D514.

It belongs to the DHHC palmitoyltransferase family. PFA3 subfamily. Post-translationally, autopalmitoylated.

It localises to the vacuole membrane. It carries out the reaction L-cysteinyl-[protein] + hexadecanoyl-CoA = S-hexadecanoyl-L-cysteinyl-[protein] + CoA. Its function is as follows. Palmitoyltransferase specific for VAC8. Palmitoylates VAC8 at one or more of its N-terminal cysteine residues, which is required for its proper membrane localization. The protein is Palmitoyltransferase pfa3 (pfa3) of Emericella nidulans (strain FGSC A4 / ATCC 38163 / CBS 112.46 / NRRL 194 / M139) (Aspergillus nidulans).